The chain runs to 224 residues: MSIRDWPAAERPRERLLEQGSASLSDAELLAIFLRTGVPGKSAVDLARHLLNQFGSLRLLLEADQEAFSKQLGLGPAKFAQLQAAQEMSKRHLAERSRQKTALENPQVVRDYLKVMLRHEPHEVFGCLFLDSKHQVLTFEALFRGSIDNTAVHPREVVKRSLANNAAAVILCHNHPSGNSDPSQADRLLTKRLQKALELIDVRVLDHFIVGDGEPLSMAECGWM.

One can recognise an MPN domain in the interval 102 to 224 (ALENPQVVRD…PLSMAECGWM (123 aa)). 3 residues coordinate Zn(2+): H173, H175, and D186. The short motif at 173 to 186 (HNHPSGNSDPSQAD) is the JAMM motif element.

The protein belongs to the UPF0758 family.

In Pseudomonas fluorescens (strain Pf0-1), this protein is UPF0758 protein Pfl01_5539.